We begin with the raw amino-acid sequence, 154 residues long: Protein X (154 aa).

Residues 68 to 117 are mitochondrial targeting sequence; it reads PCALRFTSARRMETTVNAHQILPKVLHKRTLGLSAMSTTDLEAYFKDCLF.

This sequence belongs to the orthohepadnavirus protein X family. In terms of assembly, may form homodimer. May interact with host CEBPA, CFLAR, CREB1, DDB1, E4F1, HBXIP, HSPD1/HSP60, NFKBIA, POLR2E and SMAD4. Interacts with host SMC5-SMC6 complex and induces its degradation. Interacts with host TRPC4AP; leading to prevent ubiquitination of TRPC4AP. Interacts with host PLSCR1; this interaction promotes ubiquitination and degradation of HBx and impairs HBx-mediated cell proliferation. In terms of processing, a fraction may be phosphorylated in insect cells and HepG2 cells, a human hepatoblastoma cell line. Phosphorylated in vitro by host protein kinase C or mitogen-activated protein kinase. N-acetylated in insect cells.

The protein localises to the host cytoplasm. It is found in the host nucleus. It localises to the host mitochondrion. Functionally, multifunctional protein that plays a role in silencing host antiviral defenses and promoting viral transcription. Does not seem to be essential for HBV infection. May be directly involved in development of cirrhosis and liver cancer (hepatocellular carcinoma). Most of cytosolic activities involve modulation of cytosolic calcium. The effect on apoptosis is controversial depending on the cell types in which the studies have been conducted. May induce apoptosis by localizing in mitochondria and causing loss of mitochondrial membrane potential. May also modulate apoptosis by binding host CFLAR, a key regulator of the death-inducing signaling complex (DISC). Promotes viral transcription by using the host E3 ubiquitin ligase DDB1 to target the SMC5-SMC6 complex to proteasomal degradation. This host complex would otherwise bind to viral episomal DNA, and prevents its transcription. Moderately stimulates transcription of many different viral and cellular transcription elements. Promoters and enhancers stimulated by HBx contain DNA binding sites for NF-kappa-B, AP-1, AP-2, c-EBP, ATF/CREB, or the calcium-activated factor NF-AT. The protein is Protein X of Hepatitis B virus genotype E (isolate Chimpanzee/Ch195/1999) (HBV-E).